The chain runs to 148 residues: Putative cyclin-dependent kinase inhibitor SPL2 (148 aa).

Residues serine 59 and serine 86 each carry the phosphoserine modification.

Its subcellular location is the cytoplasmic granule. It localises to the cytoplasm. Functionally, putative cyclin-dependent kinase (CDK) inhibitor necessary and sufficient for PHO pathway-dependent down-regulation of low-affinity phosphate transport. The protein is Putative cyclin-dependent kinase inhibitor SPL2 (SPL2) of Saccharomyces cerevisiae (strain ATCC 204508 / S288c) (Baker's yeast).